Reading from the N-terminus, the 484-residue chain is Cobyric acid synthase (484 aa).

The GATase cobBQ-type domain occupies 248-435; sequence VLKVIVPVLP…LHGLFEGSQS (188 aa). Catalysis depends on C329, which acts as the Nucleophile. H427 is a catalytic residue.

It belongs to the CobB/CobQ family. CobQ subfamily.

It functions in the pathway cofactor biosynthesis; adenosylcobalamin biosynthesis. Catalyzes amidations at positions B, D, E, and G on adenosylcobyrinic A,C-diamide. NH(2) groups are provided by glutamine, and one molecule of ATP is hydrogenolyzed for each amidation. The chain is Cobyric acid synthase from Pseudomonas putida (strain W619).